The following is a 372-amino-acid chain: N-methyl-L-tryptophan oxidase (372 aa).

4–34 (DLIIIGSGSVGAAAGYYATRAGLNVLMTDAH) contributes to the FAD binding site. An S-8alpha-FAD cysteine modification is found at Cys-308.

It belongs to the MSOX/MTOX family. MTOX subfamily. In terms of assembly, monomer. FAD serves as cofactor.

The enzyme catalyses N(alpha)-methyl-L-tryptophan + O2 + H2O = L-tryptophan + formaldehyde + H2O2. Functionally, catalyzes the oxidative demethylation of N-methyl-L-tryptophan. This is N-methyl-L-tryptophan oxidase from Escherichia coli O127:H6 (strain E2348/69 / EPEC).